Consider the following 353-residue polypeptide: Melanin-concentrating hormone receptor 1 (353 aa).

A disordered region spans residues 1-29 (MDLEASLLPTGPNASNTSDGPDNLTSAGS). Over 1 to 44 (MDLEASLLPTGPNASNTSDGPDNLTSAGSPPRTGSISYINIIMP) the chain is Extracellular. Positions 12 to 29 (PNASNTSDGPDNLTSAGS) are enriched in polar residues. Residues Asn13, Asn16, and Asn23 are each glycosylated (N-linked (GlcNAc...) asparagine). A helical transmembrane segment spans residues 45-67 (SVFGTICLLGIIGNSTVIFAVVK). The Cytoplasmic segment spans residues 68 to 79 (KSKLHWCNNVPD). A helical membrane pass occupies residues 80–102 (IFIINLSVVDLLFLLGMPFMIHQ). At 103 to 116 (LMGNGVWHFGETMC) the chain is on the extracellular side. A disulfide bridge links Cys116 with Cys194. A helical membrane pass occupies residues 117-139 (TLITAMDANSQFTSTYILTAMAI). Residues 140-158 (DRYLATVHPISSTKFRKPS) are Cytoplasmic-facing. A helical membrane pass occupies residues 159–181 (VATLVICLLWALSFISITPVWLY). Residues 182-209 (ARLIPFPGGAVGCGIRLPNPDTDLYWFT) are Extracellular-facing. The helical transmembrane segment at 210 to 232 (LYQFFLAFALPFVVITAAYVRIL) threads the bilayer. Residues 233–252 (QRMTSSVAPASQRSIRLRTK) lie on the Cytoplasmic side of the membrane. Residues 253–275 (RVTRTAIAICLVFFVCWAPYYVL) traverse the membrane as a helical segment. The Extracellular portion of the chain corresponds to 276–289 (QLTQLSISRPTLTF). A helical membrane pass occupies residues 290 to 312 (VYLYNAAISLGYANSCLNPFVYI). The Cytoplasmic segment spans residues 313–353 (VLCETFRKRLVLSVKPAAQGQLRAVSNAQTADEERTESKGT).

It belongs to the G-protein coupled receptor 1 family. As to quaternary structure, interacts with NCDN. In terms of tissue distribution, highest level in brain, particularly in the frontal cortex and hypothalamus, lower levels in the liver and heart.

It is found in the cell membrane. In terms of biological role, receptor for melanin-concentrating hormone, coupled to both G proteins that inhibit adenylyl cyclase and G proteins that activate phosphoinositide hydrolysis. This Homo sapiens (Human) protein is Melanin-concentrating hormone receptor 1.